Reading from the N-terminus, the 454-residue chain is Exopolyphosphatase PRUNE1 (454 aa).

Met-1 carries the post-translational modification N-acetylmethionine. The Mn(2+) site is built by Asp-28, Asp-30, Asp-106, and Asp-179. The DHH motif signature appears at 106–108 (DHH). Residues 394 to 421 (SLIAGLSQDDEDPPLPPTPMNSLVDECP) form an essential for homodimerization region. The segment at 398–421 (GLSQDDEDPPLPPTPMNSLVDECP) is disordered. At Ser-400 the chain carries Phosphoserine. Thr-411 bears the Phosphothreonine mark. Ser-415 is subject to Phosphoserine.

It belongs to the PPase class C family. Prune subfamily. In terms of assembly, homooligomer. Able to homodimerize via its C-terminal domain. Interacts with NME1. Interacts with GSK3; at focal adhesion complexes where paxillin and vinculin are colocalized. Interacts with alpha and beta tubulin. Mn(2+) serves as cofactor.

It localises to the cytoplasm. The protein localises to the nucleus. It is found in the cell junction. Its subcellular location is the focal adhesion. It carries out the reaction diphosphate + H2O = 2 phosphate + H(+). Its activity is regulated as follows. Activated by magnesium ions and inhibited by manganese ions. Inhibited by dipyridamole, moderately sensitive to IBMX and inhibited by vinpocetine. Phosphodiesterase (PDE) that has higher activity toward cAMP than cGMP, as substrate. Plays a role in cell proliferation, migration and differentiation, and acts as a negative regulator of NME1. Plays a role in the regulation of neurogenesis. Involved in the regulation of microtubule polymerization. This Rattus norvegicus (Rat) protein is Exopolyphosphatase PRUNE1 (Prune1).